The following is a 504-amino-acid chain: Anaerobic nitric oxide reductase transcription regulator NorR (504 aa).

4-aspartylphosphate is present on Asp57. The region spanning 187–416 (MIGLSPGMTQ…LEHAIHRAVV (230 aa)) is the Sigma-54 factor interaction domain. ATP-binding positions include 215 to 222 (GETGTGKE) and 278 to 287 (ADNGTLFLDE). Positions 479–498 (WAACARMLETDVANLHRLAK) form a DNA-binding region, H-T-H motif.

It functions in the pathway nitrogen metabolism; nitric oxide reduction. Functionally, required for the expression of anaerobic nitric oxide (NO) reductase, acts as a transcriptional activator for at least the norVW operon. Activation also requires sigma-54. This Escherichia coli (strain ATCC 8739 / DSM 1576 / NBRC 3972 / NCIMB 8545 / WDCM 00012 / Crooks) protein is Anaerobic nitric oxide reductase transcription regulator NorR.